The sequence spans 1128 residues: Exportin-6 (1128 aa).

An Importin N-terminal domain is found at 31-97 (IEELLNSFAG…RSCLPKLLLS (67 aa)).

This sequence belongs to the exportin family.

Its subcellular location is the nucleus. The protein localises to the cytoplasm. In terms of biological role, mediates the nuclear export of actin and profilin-actin complexes in somatic cells. This chain is Exportin-6 (xpo6), found in Danio rerio (Zebrafish).